The following is a 290-amino-acid chain: Arylamine N-acetyltransferase 1 (290 aa).

Methionine 1 is subject to N-acetylmethionine. Cysteine 68 (acyl-thioester intermediate) is an active-site residue. CoA-binding residues include threonine 103 and glycine 104. 106–107 (IH) is a binding site for substrate. Active-site residues include histidine 107 and aspartate 122. CoA is bound by residues tyrosine 208 and serine 214.

It belongs to the arylamine N-acetyltransferase family.

The protein localises to the cytoplasm. It catalyses the reaction an arylamine + acetyl-CoA = an N-acetylarylamine + CoA. Its function is as follows. Participates in the detoxification of a plethora of hydrazine and arylamine drugs. Catalyzes the N- or O-acetylation of various arylamine and heterocyclic amine substrates and is able to bioactivate several known carcinogens. The protein is Arylamine N-acetyltransferase 1 (NAT1) of Homo sapiens (Human).